A 233-amino-acid chain; its full sequence is MEKIGVIVTAGGAGRRFGGEKPKQFLELSGIPVIIITLKRMVNLPIVGQVVLTVPENYIEVAGDLLSRYNLAGIKLTAGGTTRRESVLRGIRALTGNFSIIAVHDGVRPFFPKGALSEGVKKLSEGYGGAILAVPLRDTVKEVKDNVVISTLDRSRLYAVQTPQIFRREALLKGHALGEKQHLDAVDDSILVELCGETVAVIPGDYKNLKITWPEDLEFAEFLFTRYFAKELL.

The protein belongs to the IspD/TarI cytidylyltransferase family. IspD subfamily.

The enzyme catalyses 2-C-methyl-D-erythritol 4-phosphate + CTP + H(+) = 4-CDP-2-C-methyl-D-erythritol + diphosphate. It functions in the pathway isoprenoid biosynthesis; isopentenyl diphosphate biosynthesis via DXP pathway; isopentenyl diphosphate from 1-deoxy-D-xylulose 5-phosphate: step 2/6. Its function is as follows. Catalyzes the formation of 4-diphosphocytidyl-2-C-methyl-D-erythritol from CTP and 2-C-methyl-D-erythritol 4-phosphate (MEP). The polypeptide is 2-C-methyl-D-erythritol 4-phosphate cytidylyltransferase (Carboxydothermus hydrogenoformans (strain ATCC BAA-161 / DSM 6008 / Z-2901)).